A 298-amino-acid polypeptide reads, in one-letter code: Protease HtpX homolog (298 aa).

2 helical membrane passes run 16 to 36 (VMFG…YLFW) and 38 to 58 (SWVS…LIMI). H144 lines the Zn(2+) pocket. The active site involves E145. H148 serves as a coordination point for Zn(2+). The next 2 membrane-spanning stretches (helical) occupy residues 159–179 (IALA…NWFW) and 197–217 (IIGL…ASIA). Zn(2+) is bound at residue E226.

The protein belongs to the peptidase M48B family. Requires Zn(2+) as cofactor.

The protein resides in the cell membrane. In Levilactobacillus brevis (strain ATCC 367 / BCRC 12310 / CIP 105137 / JCM 1170 / LMG 11437 / NCIMB 947 / NCTC 947) (Lactobacillus brevis), this protein is Protease HtpX homolog.